A 248-amino-acid polypeptide reads, in one-letter code: Cytochrome c oxidase subunit 2 (248 aa).

Topologically, residues 1–36 (MLFFNSILNDAPSSWALYFQDGASPSYLGVTHLNDY) are mitochondrial intermembrane. A helical transmembrane segment spans residues 37-57 (LMFYLTFIFIGVIYAICKAVI). The Mitochondrial matrix portion of the chain corresponds to 58 to 75 (EYNYNSHPIAAKYTTHGS). The chain crosses the membrane as a helical span at residues 76-100 (IVEFIWTLIPALILILVALPSFKLL). Residues 101-248 (YLLDEVQKPS…DFLAWLEENS (148 aa)) are Mitochondrial intermembrane-facing. 6 residues coordinate Cu cation: H182, C217, E219, C221, H225, and M228. A Mg(2+)-binding site is contributed by E219.

It belongs to the cytochrome c oxidase subunit 2 family. In terms of assembly, component of the cytochrome c oxidase (complex IV, CIV), a multisubunit enzyme composed of a catalytic core of 3 subunits and several supernumerary subunits. The complex exists as a monomer or a dimer and forms supercomplexes (SCs) in the inner mitochondrial membrane with ubiquinol-cytochrome c oxidoreductase (cytochrome b-c1 complex, complex III, CIII). The cofactor is Cu cation.

It is found in the mitochondrion inner membrane. It catalyses the reaction 4 Fe(II)-[cytochrome c] + O2 + 8 H(+)(in) = 4 Fe(III)-[cytochrome c] + 2 H2O + 4 H(+)(out). In terms of biological role, component of the cytochrome c oxidase, the last enzyme in the mitochondrial electron transport chain which drives oxidative phosphorylation. The respiratory chain contains 3 multisubunit complexes succinate dehydrogenase (complex II, CII), ubiquinol-cytochrome c oxidoreductase (cytochrome b-c1 complex, complex III, CIII) and cytochrome c oxidase (complex IV, CIV), that cooperate to transfer electrons derived from NADH and succinate to molecular oxygen, creating an electrochemical gradient over the inner membrane that drives transmembrane transport and the ATP synthase. Cytochrome c oxidase is the component of the respiratory chain that catalyzes the reduction of oxygen to water. Electrons originating from reduced cytochrome c in the intermembrane space (IMS) are transferred via the dinuclear copper A center (CU(A)) of subunit 2 and heme A of subunit 1 to the active site in subunit 1, a binuclear center (BNC) formed by heme A3 and copper B (CU(B)). The BNC reduces molecular oxygen to 2 water molecules using 4 electrons from cytochrome c in the IMS and 4 protons from the mitochondrial matrix. The polypeptide is Cytochrome c oxidase subunit 2 (cox2) (Schizosaccharomyces pombe (strain 972 / ATCC 24843) (Fission yeast)).